A 277-amino-acid polypeptide reads, in one-letter code: Carbonyl reductase [NADPH] 1 (277 aa).

At Ser2 the chain carries N-acetylserine. 2 positions are modified to phosphoserine: Ser2 and Ser30. NADP(+) is bound by residues 10 to 34 (VTGA…GDVV), 63 to 64 (DI), and Asn90. Residues 95 to 97 (FKT) and Gln106 each bind glutathione. Ser140 contributes to the substrate binding site. Position 193-194 (193-194 (AY)) interacts with glutathione. Tyr194 (proton acceptor) is an active-site residue. NADP(+)-binding positions include 194 to 198 (YGVTK) and 231 to 233 (VRT). Position 239 is an N6-1-carboxyethyl lysine (Lys239).

This sequence belongs to the short-chain dehydrogenases/reductases (SDR) family. Monomer.

The protein localises to the cytoplasm. The catalysed reaction is a secondary alcohol + NADP(+) = a ketone + NADPH + H(+). It carries out the reaction prostaglandin F2alpha + NADP(+) = prostaglandin E2 + NADPH + H(+). It catalyses the reaction prostaglandin E1 + NADP(+) = 15-oxoprostaglandin E1 + NADPH + H(+). The enzyme catalyses menadione + NADPH + H(+) = menadiol + NADP(+). The catalysed reaction is prostaglandin D2 + NADP(+) = 15-oxoprostaglandin D2 + NADPH + H(+). It carries out the reaction prostaglandin E2 + NADP(+) = 15-oxoprostaglandin E2 + NADPH + H(+). It catalyses the reaction prostaglandin F2alpha + NADP(+) = 15-oxoprostaglandin F2alpha + NADPH + H(+). The enzyme catalyses daunorubicin + NADPH + H(+) = 13-dihydrodaunorubicin + NADP(+). The catalysed reaction is S-nitrosoglutathione + NADPH + H(+) = S-(hydroxysulfenamide)glutathione + NADP(+). It carries out the reaction a primary alcohol + NADP(+) = an aldehyde + NADPH + H(+). It catalyses the reaction cortisol + NADPH + H(+) = 20beta-dihydrocortisol + NADP(+). The enzyme catalyses corticosterone + NADPH + H(+) = 20beta-dihydrocorticosterone + NADP(+). Its function is as follows. NADPH-dependent reductase with broad substrate specificity. Catalyzes the reduction of a wide variety of carbonyl compounds including quinones, prostaglandins, menadione, plus various xenobiotics. Catalyzes the reduction of the antitumor anthracyclines doxorubicin and daunorubicin to the cardiotoxic compounds doxorubicinol and daunorubicinol. Can convert prostaglandin E to prostaglandin F2-alpha. Can bind glutathione, which explains its higher affinity for glutathione-conjugated substrates. Catalyzes the reduction of S-nitrosoglutathione. In addition, participates in the glucocorticoid metabolism by catalyzing the NADPH-dependent cortisol/corticosterone into 20beta-dihydrocortisol (20b-DHF) or 20beta-corticosterone (20b-DHB), which are weak agonists of NR3C1 and NR3C2 in adipose tissue. This chain is Carbonyl reductase [NADPH] 1, found in Bos taurus (Bovine).